Reading from the N-terminus, the 378-residue chain is Lactosylceramide 1,3-N-acetyl-beta-D-glucosaminyltransferase (378 aa).

The Cytoplasmic portion of the chain corresponds to 1–14; sequence MRMLVSGRRVKKWQ. The helical; Signal-anchor for type II membrane protein transmembrane segment at 15-35 threads the bilayer; that stretch reads LIIQLFATCFLASLMFFWEPI. Residues 36-378 lie on the Lumenal side of the membrane; sequence DNHIVSHMKS…DTYPCRAAFI (343 aa). The N-linked (GlcNAc...) asparagine glycan is linked to Asn59.

Belongs to the glycosyltransferase 31 family. Widely expressed. Highly expressed in lung, colon, placenta, testis, pituitary gland and cerebellum. Weakly expressed in brain, liver, spleen, lymph node and thymus.

The protein resides in the golgi apparatus membrane. The enzyme catalyses a beta-D-Gal-(1-&gt;4)-beta-D-Glc-(1&lt;-&gt;1)-Cer(d18:1(4E)) + UDP-N-acetyl-alpha-D-glucosamine = a beta-D-GlcNAc-(1-&gt;3)-beta-D-Gal-(1-&gt;4)-beta-D-Glc-(1&lt;-&gt;1)-Cer(d18:1(4E)) + UDP + H(+). It carries out the reaction a neolactoside nLc4Cer(d18:1(4E)) + UDP-N-acetyl-alpha-D-glucosamine = a neolactoside IV(3)-beta-GlcNAc-nLc4Cer(d18:1(4E)) + UDP + H(+). It functions in the pathway protein modification; protein glycosylation. Its function is as follows. Beta-1,3-N-acetylglucosaminyltransferase that plays a key role in the synthesis of lacto- or neolacto-series carbohydrate chains on glycolipids, notably by participating in biosynthesis of HNK-1 and Lewis X carbohydrate structures. Has strong activity toward lactosylceramide (LacCer) and neolactotetraosylceramide (nLc(4)Cer; paragloboside), resulting in the synthesis of Lc(3)Cer and neolactopentaosylceramide (nLc(5)Cer), respectively. Probably plays a central role in regulating neolacto-series glycolipid synthesis during embryonic development. In Homo sapiens (Human), this protein is Lactosylceramide 1,3-N-acetyl-beta-D-glucosaminyltransferase.